A 216-amino-acid chain; its full sequence is MTDHKPSKSLPKATAKRLPQYYRLFKSLVEENVTRTNSQLISEKIGVDAATIRRDFSLFGELGRRGYGYETKVLRDFFGELLGQDQETHIALIGVGNLGRALLHYQFQDRNKMRITQAYDISGNPLVGTQTDDGIPIYNISDLEKNVKKSDIKTAILSVRKENAQEVVDTLVKAGIKVSLNFAPIRLKVPSDVVVQSIDLTKELQTLLFFMNDNKQ.

Positions 20–59 form a DNA-binding region, H-T-H motif; that stretch reads QYYRLFKSLVEENVTRTNSQLISEKIGVDAATIRRDFSLF. NAD(+) is bound at residue 94 to 99; the sequence is GVGNLG.

Belongs to the transcriptional regulatory Rex family. In terms of assembly, homodimer.

It localises to the cytoplasm. Modulates transcription in response to changes in cellular NADH/NAD(+) redox state. In Lactococcus lactis subsp. lactis (strain IL1403) (Streptococcus lactis), this protein is Redox-sensing transcriptional repressor Rex.